We begin with the raw amino-acid sequence, 442 residues long: Transducin beta-like protein 2 (442 aa).

A disordered region spans residues 36 to 71 (EKPSQPVCQKENEPKKSGSKKQKQNQRVRKEKPQQH). The segment covering 52 to 65 (SGSKKQKQNQRVRK) has biased composition (basic residues). WD repeat units follow at residues 84–123 (SHSG…QREH), 130–170 (VELD…DGGF), 182–222 (KHKA…STIN), 224–263 (NQMN…GEFQ), 273–312 (GHSA…KKQQ), 323–362 (EEAS…KEEY), and 366–404 (VHGE…RAVV). Residue lysine 164 forms a Glycyl lysine isopeptide (Lys-Gly) (interchain with G-Cter in SUMO2) linkage. Phosphothreonine is present on threonine 428.

This Mus musculus (Mouse) protein is Transducin beta-like protein 2 (Tbl2).